Here is a 520-residue protein sequence, read N- to C-terminus: Protein-export membrane protein SecD (520 aa).

Transmembrane regions (helical) follow at residues 10-30 (IILL…PTLA), 364-384 (DSLL…FLRY), 391-411 (LPMI…AAGI), 417-437 (LSVI…LVII), 461-481 (FWVI…LAIL), and 483-503 (LGDL…GVLI).

Belongs to the SecD/SecF family. SecD subfamily. As to quaternary structure, part of the protein translocation apparatus. Forms a complex with SecF.

Its subcellular location is the cell membrane. In terms of biological role, involved in protein export. The polypeptide is Protein-export membrane protein SecD (Haloquadratum walsbyi (strain DSM 16790 / HBSQ001)).